Consider the following 145-residue polypeptide: Ribonuclease H (145 aa).

In terms of domain architecture, RNase H type-1 spans 1–142; the sequence is MDTPVYLYTD…ADDLANRGAA (142 aa). 4 residues coordinate Mg(2+): D10, E48, D70, and D134.

Belongs to the RNase H family. Monomer. Requires Mg(2+) as cofactor.

The protein localises to the cytoplasm. The catalysed reaction is Endonucleolytic cleavage to 5'-phosphomonoester.. Endonuclease that specifically degrades the RNA of RNA-DNA hybrids. This is Ribonuclease H from Neisseria meningitidis serogroup C / serotype 2a (strain ATCC 700532 / DSM 15464 / FAM18).